Here is a 224-residue protein sequence, read N- to C-terminus: UPF0758 protein lwe1562 (224 aa).

One can recognise an MPN domain in the interval 102–224 (VIRCPDDAVK…YISLKEKGYF (123 aa)). Residues His173, His175, and Asp186 each contribute to the Zn(2+) site. A JAMM motif motif is present at residues 173–186 (HNHPSGDPTPSSED).

This sequence belongs to the UPF0758 family.

This Listeria welshimeri serovar 6b (strain ATCC 35897 / DSM 20650 / CCUG 15529 / CIP 8149 / NCTC 11857 / SLCC 5334 / V8) protein is UPF0758 protein lwe1562.